The sequence spans 449 residues: MFS-type transporter hasB (449 aa).

The next 12 helical transmembrane spans lie at 44–64, 80–100, 112–132, 135–155, 168–188, 195–215, 255–275, 296–316, 322–342, 346–366, 387–407, and 415–435; these read VAGS…CGIF, ALAW…PAVG, LPPF…CTKY, VMLA…LPAM, LAVG…PCML, VGFA…LFIA, LPWG…FAPL, AIAN…SDII, MCIV…PLEF, LAGI…FVSL, GGFC…EGAI, and FTGL…CTGT.

This sequence belongs to the major facilitator superfamily. Monocarboxylate porter (TC 2.A.1.13) family.

Its subcellular location is the membrane. Its function is as follows. MFS-type transporter; part of the gene cluster that mediates the biosynthesis of hexadehydro-astechrome (HAS), a tryptophan-derived iron(III)-complex that acts as a virulence factor in infected mice. Required for the production of HAS. The protein is MFS-type transporter hasB of Aspergillus fumigatus (strain CBS 144.89 / FGSC A1163 / CEA10) (Neosartorya fumigata).